The chain runs to 1128 residues: Lysylphosphatidylglycerol biosynthesis bifunctional protein LysX (1128 aa).

A disordered region spans residues 1–47 (MDNPPPTGVAPRHLPPGSVHTGKVTASLSHRRPDSVQDAPPAPVPHR). The segment at 1–632 (MDNPPPTGVA…GLHADGSPPD (632 aa)) is phosphatidylglycerol lysyltransferase. A run of 6 helical transmembrane segments spans residues 55 to 75 (VPHI…LWSL), 97 to 117 (APDT…AIAS), 121 to 141 (IAWW…GLRF), 147 to 167 (INAL…IAAW), 184 to 204 (GVLV…VEVF), and 240 to 260 (FVNV…VLTL). The disordered stretch occupies residues 619-644 (DTLTGLHADGSPPDWPKPDLLDSGPR). A lysine--tRNA ligase region spans residues 633-1128 (WPKPDLLDSG…TLPFPLVKPR (496 aa)). A compositionally biased stretch (basic and acidic residues) spans 634–644 (PKPDLLDSGPR). Mg(2+)-binding residues include Asp1040 and Glu1047.

It in the N-terminal section; belongs to the LPG synthetase family. In the C-terminal section; belongs to the class-II aminoacyl-tRNA synthetase family. The cofactor is Mg(2+).

The protein resides in the cell membrane. The enzyme catalyses tRNA(Lys) + L-lysine + ATP = L-lysyl-tRNA(Lys) + AMP + diphosphate. It carries out the reaction L-lysyl-tRNA(Lys) + a 1,2-diacyl-sn-glycero-3-phospho-(1'-sn-glycerol) = a 1,2-diacyl-sn-glycero-3-phospho-1'-(3'-O-L-lysyl)-sn-glycerol + tRNA(Lys). Its function is as follows. Catalyzes the production of L-lysyl-tRNA(Lys)transfer and the transfer of a lysyl group from L-lysyl-tRNA(Lys) to membrane-bound phosphatidylglycerol (PG), which produces lysylphosphatidylglycerol (LPG), one of the components of the bacterial membrane with a positive net charge. LPG synthesis contributes to the resistance to cationic antimicrobial peptides (CAMPs) and likely protects M.tuberculosis against the CAMPs produced by competiting microorganisms (bacteriocins). In fact, the modification of anionic phosphatidylglycerol with positively charged L-lysine results in repulsion of the peptides. The chain is Lysylphosphatidylglycerol biosynthesis bifunctional protein LysX (lysX) from Nocardia farcinica (strain IFM 10152).